Reading from the N-terminus, the 215-residue chain is Polysialic acid O-acetyltransferase (215 aa).

Acetyl-CoA contacts are provided by residues 119–121, R148, K154, S166, 171–172, and K190; these read DMH and YK.

It belongs to the transferase hexapeptide repeat family. As to quaternary structure, homotrimer.

It carries out the reaction [(2-&gt;6)-alpha-D-glucosyl-(1-&gt;4)-N-acetyl-alpha-D-neuraminosyl](n) + n acetyl-CoA = [(2-&gt;6)-alpha-D-glucosyl-(1-&gt;4)-N,7-O-diacetyl-alpha-D-neuraminosyl](n) + n CoA. The enzyme catalyses [(2-&gt;6)-alpha-D-glucosyl-(1-&gt;4)-N-acetyl-alpha-D-neuraminosyl](n) + n acetyl-CoA = [(2-&gt;6)-alpha-D-glucosyl-(1-&gt;4)-N,O(9)-diacetyl-alpha-D-neuraminosyl](n) + n CoA. Its function is as follows. Catalyzes the O-acetylation of capsular polymeric sialic acid consisting of polymers of (2-&gt;6)-alpha-D-glucosyl-(1-&gt;4)-N-acetyl-alpha-D-neuraminosyl residues. Shows high substrate specificity toward polymers of sialic acid that contains a large number of residues. In Neisseria meningitidis, this protein is Polysialic acid O-acetyltransferase.